The following is a 334-amino-acid chain: PDZ domain-containing protein MAGIX (334 aa).

Composition is skewed to basic and acidic residues over residues 1–13 (MEPR…DPRG) and 209–224 (LETH…EPRK). 2 disordered regions span residues 1–26 (MEPR…LAGP) and 209–306 (LETH…WLVP). In terms of domain architecture, PDZ spans 125–209 (SVELVRGYAG…QLHLVIRRPL (85 aa)). The segment covering 244–260 (GSRSSSTSLVQHPPSRT) has biased composition (polar residues). Ser272 bears the Phosphoserine mark.

The protein is PDZ domain-containing protein MAGIX (MAGIX) of Homo sapiens (Human).